A 261-amino-acid chain; its full sequence is Ribonuclease HII (261 aa).

Residues 1–20 are compositionally biased toward basic and acidic residues; that stretch reads MIRDKSAKRPAKDAPKKAAV. The disordered stretch occupies residues 1–23; it reads MIRDKSAKRPAKDAPKKAAVKEA. One can recognise an RNase H type-2 domain in the interval 42–230; it reads WPVAGCDEAG…VAAARAKHMP (189 aa). A divalent metal cation contacts are provided by D48, E49, and D139.

It belongs to the RNase HII family. The cofactor is Mn(2+). Mg(2+) is required as a cofactor.

It localises to the cytoplasm. The catalysed reaction is Endonucleolytic cleavage to 5'-phosphomonoester.. Its function is as follows. Endonuclease that specifically degrades the RNA of RNA-DNA hybrids. The sequence is that of Ribonuclease HII from Bradyrhizobium diazoefficiens (strain JCM 10833 / BCRC 13528 / IAM 13628 / NBRC 14792 / USDA 110).